Consider the following 508-residue polypeptide: DASH complex subunit ASK1 (508 aa).

Disordered regions lie at residues 86-138 (LVDG…TLSS) and 150-355 (SRAA…QLRS). The segment covering 116–138 (EPSQYTPRPQTSAGGHDTTTLSS) has biased composition (polar residues). A compositionally biased stretch (basic and acidic residues) spans 161 to 175 (QHHDDSSVLTDRDGD). A compositionally biased stretch (acidic residues) spans 201–213 (DEMDIDMDEEDSE). Positions 229–238 (RYYDDDHGFE) are enriched in basic and acidic residues. The segment covering 239–258 (QGEEEEDEEEEEEEEEEEEG) has biased composition (acidic residues). A compositionally biased stretch (basic and acidic residues) spans 326–338 (IKQEDTEKKRPLW).

This sequence belongs to the DASH complex ASK1 family. As to quaternary structure, component of the DASH complex consisting of ASK1, DAD1, DAD2, DAD3, DAD4, DAM1, DUO1, HSK3, SPC19 and SPC34, with a stoichiometry of one copy of each subunit per complex. Multiple DASH complexes oligomerize to form a ring that encircles spindle microtubules and organizes the rod-like NDC80 complexes of the outer kinetochore. On cytoplasmic microtubules, DASH complexes appear to form patches instead of rings.

The protein localises to the chromosome. It localises to the centromere. Its subcellular location is the kinetochore. The protein resides in the cytoplasm. It is found in the cytoskeleton. The protein localises to the spindle. It localises to the nucleus. Functionally, component of the DASH complex that connects microtubules with kinetochores and couples microtubule depolymerisation to chromosome movement; it is involved in retrieving kinetochores to the spindle poles before their re-orientation on the spindle in early mitosis and allows microtubule depolymerization to pull chromosomes apart and resist detachment during anaphase. Kinetochores, consisting of a centromere-associated inner segment and a microtubule-contacting outer segment, play a crucial role in chromosome segregation by mediating the physical connection between centromeric DNA and microtubules. Kinetochores also serve as an input point for the spindle assembly checkpoint, which delays anaphase until all chromosomes have bioriented on the mitotic spindle. The sequence is that of DASH complex subunit ASK1 from Chaetomium thermophilum (strain DSM 1495 / CBS 144.50 / IMI 039719) (Thermochaetoides thermophila).